The primary structure comprises 313 residues: Ribosomal RNA small subunit methyltransferase H (313 aa).

S-adenosyl-L-methionine contacts are provided by residues 35–37 (GGH), D55, F79, D101, and Q108.

It belongs to the methyltransferase superfamily. RsmH family.

The protein resides in the cytoplasm. The enzyme catalyses cytidine(1402) in 16S rRNA + S-adenosyl-L-methionine = N(4)-methylcytidine(1402) in 16S rRNA + S-adenosyl-L-homocysteine + H(+). Functionally, specifically methylates the N4 position of cytidine in position 1402 (C1402) of 16S rRNA. This Enterobacter sp. (strain 638) protein is Ribosomal RNA small subunit methyltransferase H.